The sequence spans 2764 residues: Teneurin-2 (2764 aa).

The Teneurin N-terminal domain maps to 1-375 (MDVKDRRHRS…KPSKYCSWKC (375 aa)). At 1–379 (MDVKDRRHRS…YCSWKCAALS (379 aa)) the chain is on the cytoplasmic side. 2 positions are modified to phosphoserine: S90 and S124. The segment at 111 to 271 (TGSDADSDTE…HHHSSANSLN (161 aa)) is disordered. Over residues 141–155 (SSGLSSRENSALTLT) the composition is skewed to polar residues. At T155 the chain carries Phosphothreonine. Phosphoserine is present on S157. The segment covering 159–168 (NENKSDDDNG) has biased composition (basic and acidic residues). Positions 174-188 (TSSSSLLPSAQLPSS) are enriched in low complexity. Residues 202-211 (DSNTSHQIMD) are compositionally biased toward polar residues. Low complexity predominate over residues 229-240 (SGPQQASSSGPP). Residues 380-400 (AIAAALLLAILLAYFIAMHLL) traverse the membrane as a helical segment. At 401-2764 (GLNWQLQPAD…FLRQNEMGKR (2364 aa)) the chain is on the extracellular side. N-linked (GlcNAc...) asparagine glycosylation is found at N443 and N482. EGF-like domains lie at 575–603 (DCPRNCHGNGECVSGLCHCFPGFLGADCA), 598–634 (LGADCAKAACPVLCSGNGQYSKGTCQCYSGWKGAECD), 636–668 (PMNQCIDPSCGGHGSCIDGNCVCAAGYKGEHCE), 669–701 (EVDCLDPTCSSHGVCVNGECLCSPGWGGLNCEL), 702–735 (ARVQCPDQCSGHGTYLPDSGLCSCDPNWMGPDCS), 737–765 (VCSVDCGTHGVCIGGACRCEEGWTGAACD), 768–796 (VCHPRCIEHGTCKDGKCECREGWNGEHCT), and 798–831 (DGCPDLCNGNGRCTLGQNSWQCVCQTGWRGPGCN). 22 disulfide bridges follow: C576-C586, C580-C591, C593-C602, C611-C622, C624-C633, C640-C651, C645-C656, C658-C667, C672-C683, C677-C688, C690-C699, C710-C723, C725-C734, C738-C748, C742-C753, C755-C764, C769-C779, C773-C784, C786-C795, C800-C810, C804-C819, and C821-C830. N915, N938, and N1257 each carry an N-linked (GlcNAc...) asparagine glycan. NHL repeat units lie at residues 1262 to 1306 (LELR…VKSL), 1332 to 1376 (ARCG…NGII), 1391 to 1442 (LSCD…IAGR), 1464 to 1491 (LESASAIAISHTGVLYITETDEKKINRL), and 1520 to 1563 (CYSG…VSKN). Residues 1573 to 1592 (YEAASPGEQELYVFNADGIH) form a YD 1 repeat. The N-linked (GlcNAc...) asparagine glycan is linked to N1606. 3 YD repeats span residues 1609 to 1629 (YSADNDVTELIDNNGNSLKIR), 1672 to 1691 (YDGNTGLLATKSDETGWTTF), and 1692 to 1714 (YDYDHEGRLTNVTRPTGVVTSLH). N1702, N1739, N1763, N1797, and N1882 each carry an N-linked (GlcNAc...) asparagine glycan. YD repeat units follow at residues 1885–1904 (YFFNGRLAGLQRGAMSERTD), 1926–1944 (YLDKSMVLLLQSQRQYIFE), 1945–1965 (YDSSDRLHAVTMPSVARHSMS), 1972–1989 (YIRNIYNPPESNASVIFD), 1990–2011 (YSDDGRILKTSFLGTGRQVFYK), 2012–2029 (YGKLSKLSEIVYDSTAVT), 2032–2052 (YDETTGVLKMVNLQSGGFSCT), 2055–2075 (YRKVGPLVDKQIYRFSEEGMI), 2083–2103 (YHDNSFRIASIKPVISETPLP), 2109–2126 (YDEISGKVEHFGKFGVIY), 2127–2153 (YDINQIITTAVMTLSKHFDTHGRIKEV), 2155–2168 (YEMFRSLMYWMTVQ), 2169–2192 (YDSMGRVIKRELKLGPYANTTKYT), 2195–2215 (YDGDGQLQSVAVNDRPTWRYS), 2216–2236 (YDLNGNLHLLNPGNSARLMPL), 2238–2258 (YDLRDRITRLGDVQYKIDDDG), 2270–2290 (YNSKGLLTRAYNKASGWSVQY), and 2292–2312 (YDGVGRRASYKTNLGHHLQYF). N1983 carries N-linked (GlcNAc...) asparagine glycosylation. The N-linked (GlcNAc...) asparagine glycan is linked to N2187. The N-linked (GlcNAc...) asparagine glycan is linked to N2327. The YD 23 repeat unit spans residues 2338 to 2379 (YDLQGHLFAMESSSGEEYYVASDNTGTPLAVYSINGLMIKQL). N2638 carries an N-linked (GlcNAc...) asparagine glycan.

The protein belongs to the tenascin family. Teneurin subfamily. Homodimer; disulfide-linked. Heterodimer with either TENM1 or TENM3. May also form heterodimer with TENM4. Post-translationally, derives from the membrane form by proteolytic processing. Derives from the plasma membrane form by proteolytic cleavage and translocates to the nucleus. Homophilic binding of the C-terminal extracellular domain stimulates its proteolytic cleavage and release in the cytoplasmic. Is subjected to rapid degradation by the proteasome pathway. As to expression, expressed in the cortex, CA1, CA2, CA3, dentate gyrus and granular layer of the hippocampus. Expressed in the Purkinje cells and molecular layer of the cerebellum.

The protein resides in the cell membrane. It is found in the presynaptic cell membrane. It localises to the postsynaptic cell membrane. The protein localises to the endoplasmic reticulum. Its subcellular location is the golgi apparatus. The protein resides in the synapse. It is found in the cell projection. It localises to the dendritic spine. The protein localises to the filopodium. Its subcellular location is the growth cone. The protein resides in the nucleus. It is found in the PML body. Functionally, involved in neural development, regulating the establishment of proper connectivity within the nervous system. Acts as a ligand of the ADGRL1 and ADGRL3 receptors that are expressed at the surface of adjacent cells. Promotes the formation of filopodia and enlarged growth cone in neuronal cells. Mediates axon guidance and homophilic and heterophilic cell-cell adhesion. May function as a cellular signal transducer. In terms of biological role, induces gene transcription inhibition. The protein is Teneurin-2 (Tenm2) of Mus musculus (Mouse).